Here is a 119-residue protein sequence, read N- to C-terminus: Large ribosomal subunit protein bL20 (119 aa).

This sequence belongs to the bacterial ribosomal protein bL20 family.

Its function is as follows. Binds directly to 23S ribosomal RNA and is necessary for the in vitro assembly process of the 50S ribosomal subunit. It is not involved in the protein synthesizing functions of that subunit. This Acidovorax sp. (strain JS42) protein is Large ribosomal subunit protein bL20.